A 375-amino-acid chain; its full sequence is Trichodiene synthase (375 aa).

It belongs to the trichodiene synthase family.

The enzyme catalyses (2E,6E)-farnesyl diphosphate = trichodiene + diphosphate. It functions in the pathway sesquiterpene biosynthesis; trichothecene biosynthesis. Its function is as follows. TS is a member of the terpene cyclase group of enzymes. It catalyzes the isomerization and cyclization of farnesyl pyro-phosphate to form trichodiene, the first cyclic intermediate in the biosynthetic pathway for trichothecenes. It serves to branch trichothecene biosynthesis from the isoprenoid pathway. In Gibberella zeae (strain ATCC MYA-4620 / CBS 123657 / FGSC 9075 / NRRL 31084 / PH-1) (Wheat head blight fungus), this protein is Trichodiene synthase (TRI5).